Reading from the N-terminus, the 312-residue chain is Peptide methionine sulfoxide reductase MsrA/MsrB 1 (312 aa).

Residues 1-155 form a peptide methionine sulfoxide reductase region; the sequence is MAEIYLAGGC…PSGYCHIDVT (155 aa). Residue Cys10 is part of the active site. The 124-residue stretch at 172-295 folds into the MsrB domain; sequence QEVLKASLSE…NSASLRFVAK (124 aa). The active-site Nucleophile is the Cys284.

The protein in the N-terminal section; belongs to the MsrA Met sulfoxide reductase family. In the C-terminal section; belongs to the MsrB Met sulfoxide reductase family.

Its subcellular location is the cell membrane. The enzyme catalyses L-methionyl-[protein] + [thioredoxin]-disulfide + H2O = L-methionyl-(S)-S-oxide-[protein] + [thioredoxin]-dithiol. It carries out the reaction [thioredoxin]-disulfide + L-methionine + H2O = L-methionine (S)-S-oxide + [thioredoxin]-dithiol. It catalyses the reaction L-methionyl-[protein] + [thioredoxin]-disulfide + H2O = L-methionyl-(R)-S-oxide-[protein] + [thioredoxin]-dithiol. Has an important function as a repair enzyme for proteins that have been inactivated by oxidation. Catalyzes the reversible oxidation-reduction of methionine sulfoxide in proteins to methionine. The chain is Peptide methionine sulfoxide reductase MsrA/MsrB 1 (msrAB1) from Streptococcus pneumoniae serotype 4 (strain ATCC BAA-334 / TIGR4).